The sequence spans 477 residues: Glutamate--tRNA ligase (477 aa).

The 'HIGH' region signature appears at 12-22; it reads PSPTGMFHVGG. Residues Cys-106, Cys-108, Cys-128, and Asp-130 each contribute to the Zn(2+) site. The 'KMSKS' region motif lies at 238-242; sequence KLSKR. An ATP-binding site is contributed by Lys-241.

The protein belongs to the class-I aminoacyl-tRNA synthetase family. Glutamate--tRNA ligase type 1 subfamily. Monomer. Requires Zn(2+) as cofactor.

It is found in the cytoplasm. It carries out the reaction tRNA(Glu) + L-glutamate + ATP = L-glutamyl-tRNA(Glu) + AMP + diphosphate. Catalyzes the attachment of glutamate to tRNA(Glu) in a two-step reaction: glutamate is first activated by ATP to form Glu-AMP and then transferred to the acceptor end of tRNA(Glu). The chain is Glutamate--tRNA ligase from Thermobifida fusca (strain YX).